The primary structure comprises 346 residues: tRNA N6-adenosine threonylcarbamoyltransferase (346 aa).

2 residues coordinate Fe cation: His111 and His115. Substrate-binding positions include 134 to 138, Asp167, Gly180, and Asn279; that span reads LVSGG. Asp307 contributes to the Fe cation binding site.

This sequence belongs to the KAE1 / TsaD family. The cofactor is Fe(2+).

It is found in the cytoplasm. The catalysed reaction is L-threonylcarbamoyladenylate + adenosine(37) in tRNA = N(6)-L-threonylcarbamoyladenosine(37) in tRNA + AMP + H(+). Required for the formation of a threonylcarbamoyl group on adenosine at position 37 (t(6)A37) in tRNAs that read codons beginning with adenine. Is involved in the transfer of the threonylcarbamoyl moiety of threonylcarbamoyl-AMP (TC-AMP) to the N6 group of A37, together with TsaE and TsaB. TsaD likely plays a direct catalytic role in this reaction. In Burkholderia ambifaria (strain MC40-6), this protein is tRNA N6-adenosine threonylcarbamoyltransferase.